We begin with the raw amino-acid sequence, 425 residues long: Histone-binding protein RBBP4 (425 aa).

The residue at position 2 (Ala-2) is an N-acetylalanine. WD repeat units lie at residues 32–125 (YDLV…NHEG), 126–175 (EVNR…RLRG), 176–223 (HQKE…KTIF), 225–270 (GHTA…HSVD), 271–314 (AHTA…HSFE), 315–371 (SHKD…FIHG), and 372–404 (GHTAKISDFSWNPNEPWVICSVSEDNIMQVWQM). The interval 361 to 406 (DGPPELLFIHGGHTAKISDFSWNPNEPWVICSVSEDNIMQVWQMAE) is interaction with HAT1.

The protein belongs to the WD repeat RBAP46/RBAP48/MSI1 family. In terms of assembly, binds directly to histone H4, probably via helix 1 of the histone fold, a region that is not accessible when histone H4 is in chromatin. Interacts with CHAF1A, HDAC1, HDAC2, HDAC3 and HIRA. May also interact with HAT1.

The protein resides in the nucleus. The protein localises to the chromosome. It localises to the telomere. In terms of biological role, core histone-binding subunit that may target chromatin assembly factors, chromatin remodeling factors and histone deacetylases to their histone substrates in a manner that is regulated by nucleosomal DNA. Component of several complexes which regulate chromatin metabolism. In Gallus gallus (Chicken), this protein is Histone-binding protein RBBP4 (RBBP4).